We begin with the raw amino-acid sequence, 189 residues long: Interferon alpha-F (189 aa).

The first 23 residues, 1–23, serve as a signal peptide directing secretion; it reads MAPAWSLLLALLLLSCNAICSLG. Disulfide bonds link Cys24/Cys122 and Cys52/Cys162.

The protein belongs to the alpha/beta interferon family.

The protein localises to the secreted. Its function is as follows. Produced by macrophages, IFN-alpha have antiviral activities. Interferon stimulates the production of two enzymes: a protein kinase and an oligoadenylate synthetase. In Bos taurus (Bovine), this protein is Interferon alpha-F (IFNAF).